The following is a 179-amino-acid chain: Peptidyl-tRNA hydrolase 2, mitochondrial (179 aa).

A helical transmembrane segment spans residues 10 to 32; sequence YLTNPGALSLAAGVACGVCLGWG. Residues lysine 76, lysine 81, lysine 95, lysine 106, lysine 115, lysine 171, and lysine 177 each participate in a glycyl lysine isopeptide (Lys-Gly) (interchain with G-Cter in ubiquitin) cross-link.

This sequence belongs to the PTH2 family. As to quaternary structure, monomer. Ubiquitinated by PRKN during mitophagy, leading to its degradation and enhancement of mitophagy. Deubiquitinated by USP30.

Its subcellular location is the mitochondrion outer membrane. It catalyses the reaction an N-acyl-L-alpha-aminoacyl-tRNA + H2O = an N-acyl-L-amino acid + a tRNA + H(+). Functionally, peptidyl-tRNA hydrolase which releases tRNAs from the ribosome during protein synthesis. Promotes caspase-independent apoptosis by regulating the function of two transcriptional regulators, AES and TLE1. This is Peptidyl-tRNA hydrolase 2, mitochondrial (PTRH2) from Bos taurus (Bovine).